A 440-amino-acid polypeptide reads, in one-letter code: Putative purine permease YwdJ (440 aa).

Transmembrane regions (helical) follow at residues L3–V23, L39–H59, P67–A87, L96–I116, V130–I150, G156–T176, I188–I208, G231–M251, L283–I303, F314–F334, V341–F361, S374–L394, and P399–A419.

The protein belongs to the nucleobase:cation symporter-2 (NCS2) (TC 2.A.40) family.

It is found in the cell membrane. The chain is Putative purine permease YwdJ (ywdJ) from Bacillus subtilis (strain 168).